Consider the following 347-residue polypeptide: Protein N-terminal asparagine amidohydrolase (347 aa).

The enzyme catalyses N-terminal L-asparaginyl-[protein] + H2O + H(+) = N-terminal L-aspartyl-[protein] + NH4(+). In terms of biological role, N-terminal asparagine deamidase that mediates deamidation of N-terminal asparagine residues to aspartate. Required for the ubiquitin-dependent turnover of intracellular proteins that initiate with Met-Asn. These proteins are acetylated on the retained initiator methionine and can subsequently be modified by the removal of N-acetyl methionine by acylaminoacid hydrolase (AAH). Conversion of the resulting N-terminal asparagine to aspartate by NTAN1 renders the protein susceptible to arginylation, polyubiquitination and degradation as specified by the N-end rule. This enzyme does not act on substrates with internal or C-terminal asparagines and does not act on glutamine residues in any position. Does not seem to be involved in immune response, unlike the N-terminal glutamine amidohydrolase NTAQ1. The protein is Protein N-terminal asparagine amidohydrolase of Arabidopsis thaliana (Mouse-ear cress).